The primary structure comprises 795 residues: Phenylalanine--tRNA ligase beta subunit (795 aa).

Residues 39 to 148 (AGRFTGVVVG…AEAPIGQDIR (110 aa)) form the tRNA-binding domain. The region spanning 401–476 (PQPATITLRR…RVYGYDAIPN (76 aa)) is the B5 domain. Mg(2+) is bound by residues aspartate 454, aspartate 460, glutamate 463, and glutamate 464. The FDX-ACB domain maps to 701–794 (SRFPANRRDI…LKQRFQASLR (94 aa)).

The protein belongs to the phenylalanyl-tRNA synthetase beta subunit family. Type 1 subfamily. As to quaternary structure, tetramer of two alpha and two beta subunits. It depends on Mg(2+) as a cofactor.

It is found in the cytoplasm. The enzyme catalyses tRNA(Phe) + L-phenylalanine + ATP = L-phenylalanyl-tRNA(Phe) + AMP + diphosphate + H(+). The polypeptide is Phenylalanine--tRNA ligase beta subunit (Sodalis glossinidius (strain morsitans)).